Here is a 169-residue protein sequence, read N- to C-terminus: Proepiregulin (169 aa).

The first 29 residues, 1 to 29, serve as a signal peptide directing secretion; sequence MTAGRRMEMLCAGRVPALLLCLGFHLLQA. Residues 30–62 constitute a propeptide that is removed on maturation; sequence VLSTTVIPSCIPGESSDNCTALVQTEDNPRVAQ. A glycan (N-linked (GlcNAc...) asparagine) is linked at asparagine 47. The Extracellular portion of the chain corresponds to 60-119; that stretch reads VAQVSITKCSSDMNGYCLHGQCIYLVDMSQNYCRCEVGYTGVRCEHFFLTVHQPLSKEYV. An EGF-like domain is found at 64–104; the sequence is SITKCSSDMNGYCLHGQCIYLVDMSQNYCRCEVGYTGVRCE. 3 disulfides stabilise this stretch: cysteine 68–cysteine 81, cysteine 76–cysteine 92, and cysteine 94–cysteine 103. Positions 109–169 are cleaved as a propeptide — removed in mature form; that stretch reads TVHQPLSKEY…TSGDPELPQV (61 aa). The helical transmembrane segment at 120–140 threads the bilayer; it reads ALTVILIILFLITVVGSTYYF. Residues 141–169 lie on the Cytoplasmic side of the membrane; that stretch reads CRWYRNRKSKEPKKEYERVTSGDPELPQV.

In terms of assembly, interacts with EGFR and ERBB4. As to expression, in normal adults, expressed predominantly in the placenta and peripheral blood leukocytes. High levels were detected in carcinomas of the bladder, lung, kidney and colon.

Its subcellular location is the secreted. The protein localises to the extracellular space. The protein resides in the cell membrane. Ligand of the EGF receptor/EGFR and ERBB4. Stimulates EGFR and ERBB4 tyrosine phosphorylation. Contributes to inflammation, wound healing, tissue repair, and oocyte maturation by regulating angiogenesis and vascular remodeling and by stimulating cell proliferation. The chain is Proepiregulin (EREG) from Homo sapiens (Human).